Reading from the N-terminus, the 638-residue chain is Polypeptide N-acetylgalactosaminyltransferase 15 (638 aa).

The Cytoplasmic segment spans residues 1 to 12; the sequence is MLPRKRPRSGRS. Residues 13 to 35 form a helical; Signal-anchor for type II membrane protein membrane-spanning segment; sequence RLQFLLLFLTLGCVLMMVILLHP. At 36–638 the chain is on the lumenal side; that stretch reads PPPTLHQAVT…FDQIHPVDER (603 aa). The tract at residues 134-157 is disordered; that stretch reads KDWRTEEDGEESEEVLTPLGPDSD. 5 cysteine pairs are disulfide-bonded: Cys-181–Cys-411, Cys-402–Cys-481, Cys-516–Cys-535, Cys-561–Cys-574, and Cys-602–Cys-619. Positions 190–299 are catalytic subdomain A; that stretch reads LPTASVILCF…PGWLEPLLSR (110 aa). The substrate site is built by Asp-231 and Arg-260. Residues Asp-283, His-285, and His-416 each coordinate Mn(2+). Residues 357 to 419 form a catalytic subdomain B region; it reads PVRSPVVPRE…PCSRVGHIYR (63 aa). Arg-419 serves as a coordination point for substrate. One can recognise a Ricin B-type lectin domain in the interval 503-630; sequence RFSGKLHNTG…GKTSQLWRFD (128 aa). Asn-573 carries an N-linked (GlcNAc...) asparagine glycan.

This sequence belongs to the glycosyltransferase 2 family. GalNAc-T subfamily. Mn(2+) serves as cofactor. As to expression, specifically expressed in testis.

It localises to the golgi apparatus membrane. The catalysed reaction is L-seryl-[protein] + UDP-N-acetyl-alpha-D-galactosamine = a 3-O-[N-acetyl-alpha-D-galactosaminyl]-L-seryl-[protein] + UDP + H(+). It catalyses the reaction L-threonyl-[protein] + UDP-N-acetyl-alpha-D-galactosamine = a 3-O-[N-acetyl-alpha-D-galactosaminyl]-L-threonyl-[protein] + UDP + H(+). It participates in protein modification; protein glycosylation. Its function is as follows. Catalyzes the initial reaction in O-linked oligosaccharide biosynthesis, the transfer of an N-acetyl-D-galactosamine residue to a serine or threonine residue on the protein receptor. Although it displays a much weaker activity toward all substrates tested compared to GALNT2, it is able to transfer up to seven GalNAc residues to the Muc5AC peptide, suggesting that it can fill vicinal Thr/Ser residues in cooperation with other GALNT proteins. Prefers Muc1a as substrate. The protein is Polypeptide N-acetylgalactosaminyltransferase 15 (Galnt15) of Mus musculus (Mouse).